We begin with the raw amino-acid sequence, 348 residues long: UDP-N-acetylglucosamine--N-acetylmuramyl-(pentapeptide) pyrophosphoryl-undecaprenol N-acetylglucosamine transferase (348 aa).

Residues Thr-11–Gly-13, Asn-120, Arg-161, Ser-187, and Gln-281 contribute to the UDP-N-acetyl-alpha-D-glucosamine site.

This sequence belongs to the glycosyltransferase 28 family. MurG subfamily.

The protein resides in the cell inner membrane. The catalysed reaction is di-trans,octa-cis-undecaprenyl diphospho-N-acetyl-alpha-D-muramoyl-L-alanyl-D-glutamyl-meso-2,6-diaminopimeloyl-D-alanyl-D-alanine + UDP-N-acetyl-alpha-D-glucosamine = di-trans,octa-cis-undecaprenyl diphospho-[N-acetyl-alpha-D-glucosaminyl-(1-&gt;4)]-N-acetyl-alpha-D-muramoyl-L-alanyl-D-glutamyl-meso-2,6-diaminopimeloyl-D-alanyl-D-alanine + UDP + H(+). The protein operates within cell wall biogenesis; peptidoglycan biosynthesis. Cell wall formation. Catalyzes the transfer of a GlcNAc subunit on undecaprenyl-pyrophosphoryl-MurNAc-pentapeptide (lipid intermediate I) to form undecaprenyl-pyrophosphoryl-MurNAc-(pentapeptide)GlcNAc (lipid intermediate II). The sequence is that of UDP-N-acetylglucosamine--N-acetylmuramyl-(pentapeptide) pyrophosphoryl-undecaprenol N-acetylglucosamine transferase from Crocosphaera subtropica (strain ATCC 51142 / BH68) (Cyanothece sp. (strain ATCC 51142)).